The chain runs to 169 residues: Capsid protein (169 aa).

Belongs to the nanoviridae capsid protein family.

It localises to the virion. The chain is Capsid protein (DNA-S) from Subterranean clover stunt virus (strain F) (SCSV).